The chain runs to 650 residues: Vitrin (650 aa).

An N-terminal signal peptide occupies residues 1 to 26; sequence MGIVVPTMKASVIEVLLVLLVTGIHS. The LCCL domain maps to 40 to 133; sequence TVPQINCDVK…LSLPRWRESF (94 aa). 2 disulfide bridges follow: Cys-46/Cys-62 and Cys-66/Cys-86. The tract at residues 198-226 is disordered; the sequence is RSTSKPFAASVTNSPRPQPVGHRSQEMEE. VWFA domains are found at residues 265 to 450 and 467 to 640; these read DLSF…VKRV and DIGF…IQNI. Asn-492 carries an N-linked (GlcNAc...) asparagine glycan.

As to quaternary structure, binds dermatan sulfate and chondroitin sulfate.

Its subcellular location is the secreted. The protein resides in the extracellular space. The protein localises to the extracellular matrix. In terms of biological role, promotes matrix assembly and cell adhesiveness. Plays a role in spinal cord formation by regulating the proliferation and differentiation of neural stem cells. The chain is Vitrin (Vit) from Mus musculus (Mouse).